Here is a 1358-residue protein sequence, read N- to C-terminus: Probable aldehyde oxidase 1 (1358 aa).

Residues 4–91 (AAAVVAVNGE…HCAVTTSEGI (88 aa)) enclose the 2Fe-2S ferredoxin-type domain. Residues Cys-43, Cys-48, Cys-51, and Cys-73 each coordinate [2Fe-2S] cluster. An FAD-binding PCMH-type domain is found at 236–418 (AVTGDGCWFH…ISISIPDWCS (183 aa)). Positions 540–567 (KPENANNVPNGSCTTNGTTNGSAESTVD) are disordered. Over residues 549–561 (NGSCTTNGTTNGS) the composition is skewed to low complexity.

The protein belongs to the xanthine dehydrogenase family. As to quaternary structure, aldehyde oxidases (AO) are homodimers and heterodimers of AO subunits. It depends on [2Fe-2S] cluster as a cofactor. The cofactor is FAD. Requires Mo-molybdopterin as cofactor.

It carries out the reaction an aldehyde + O2 + H2O = a carboxylate + H2O2 + H(+). The chain is Probable aldehyde oxidase 1 from Oryza sativa subsp. japonica (Rice).